Reading from the N-terminus, the 245-residue chain is DNA repair protein RecO (245 aa).

This sequence belongs to the RecO family.

Involved in DNA repair and RecF pathway recombination. This chain is DNA repair protein RecO, found in Klebsiella pneumoniae subsp. pneumoniae (strain ATCC 700721 / MGH 78578).